The following is a 540-amino-acid chain: 2,3-bisphosphoglycerate-independent phosphoglycerate mutase (540 aa).

The Mn(2+) site is built by D24 and S74. The Phosphoserine intermediate role is filled by S74. Substrate contacts are provided by residues H135, 165 to 166 (RD), R197, R203, 268 to 271 (RPDR), and K341. D408, H412, D449, H450, and H467 together coordinate Mn(2+).

It belongs to the BPG-independent phosphoglycerate mutase family. In terms of assembly, monomer. Mn(2+) serves as cofactor.

It carries out the reaction (2R)-2-phosphoglycerate = (2R)-3-phosphoglycerate. It functions in the pathway carbohydrate degradation; glycolysis; pyruvate from D-glyceraldehyde 3-phosphate: step 3/5. In terms of biological role, catalyzes the interconversion of 2-phosphoglycerate and 3-phosphoglycerate. This Prochlorococcus marinus (strain MIT 9303) protein is 2,3-bisphosphoglycerate-independent phosphoglycerate mutase.